Reading from the N-terminus, the 493-residue chain is Beta-amyrin 11-oxidase (493 aa).

The helical transmembrane segment at 7–23 (CMSAATLLVCYIFGSKF) threads the bilayer. Cysteine 439 lines the heme pocket.

Belongs to the cytochrome P450 family. Heme serves as cofactor. As to expression, expressed in roots and stolons. Not detected in leaves and stems.

The protein resides in the membrane. The enzyme catalyses beta-amyrin + 2 reduced [NADPH--hemoprotein reductase] + 2 O2 = 11-oxo-beta-amyrin + 2 oxidized [NADPH--hemoprotein reductase] + 3 H2O + 2 H(+). The catalysed reaction is beta-amyrin + reduced [NADPH--hemoprotein reductase] + O2 = 11alpha-hydroxy-beta-amyrin + oxidized [NADPH--hemoprotein reductase] + H2O + H(+). It carries out the reaction 11alpha-hydroxy-beta-amyrin + reduced [NADPH--hemoprotein reductase] + O2 = 11-oxo-beta-amyrin + oxidized [NADPH--hemoprotein reductase] + 2 H2O + H(+). In terms of biological role, involved in the biosynthesis of Glycyrrhetinic acid (GA), a natural product which exhibits anti-inflammatory activity. Catalyzes 2 successive oxidations of beta-amyrin, producing a precursor of the triterpene sweetener glycyrrhizin. Unable to use 11-deoxoglycyrrhetinic acid or ent-kaurenoic acid as substrates. This is Beta-amyrin 11-oxidase from Glycyrrhiza uralensis (Chinese licorice).